Reading from the N-terminus, the 566-residue chain is Chaperonin GroEL 1 (566 aa).

ATP is bound by residues 29-32, 86-90, G413, and D492; these read TIGP and DGTTT. The interval 520-540 is disordered; sequence DKPEPPAPAGDGGGDPMGGMG. The span at 529–540 shows a compositional bias: gly residues; it reads GDGGGDPMGGMG.

This sequence belongs to the chaperonin (HSP60) family. Forms a cylinder of 14 subunits composed of two heptameric rings stacked back-to-back. Interacts with the co-chaperonin GroES.

The protein localises to the cytoplasm. The enzyme catalyses ATP + H2O + a folded polypeptide = ADP + phosphate + an unfolded polypeptide.. Its function is as follows. Together with its co-chaperonin GroES, plays an essential role in assisting protein folding. The GroEL-GroES system forms a nano-cage that allows encapsulation of the non-native substrate proteins and provides a physical environment optimized to promote and accelerate protein folding. This chain is Chaperonin GroEL 1, found in Prochlorococcus marinus (strain MIT 9313).